Here is a 472-residue protein sequence, read N- to C-terminus: Glycerol-3-phosphate acyltransferase, chloroplastic (472 aa).

Residues Met-1–Asn-102 constitute a chloroplast transit peptide. The HXXXXD motif motif lies at His-241–Asp-246.

This sequence belongs to the GPAT/DAPAT family.

The protein resides in the plastid. The protein localises to the chloroplast stroma. The enzyme catalyses sn-glycerol 3-phosphate + an acyl-CoA = a 1-acyl-sn-glycero-3-phosphate + CoA. It participates in phospholipid metabolism; CDP-diacylglycerol biosynthesis; CDP-diacylglycerol from sn-glycerol 3-phosphate: step 1/3. Esterifies acyl-group from acyl-ACP to the sn-1 position of glycerol-3-phosphate. The enzyme from chilling-resistant plants discriminates against non-fluid palmitic acid and selects oleic acid whereas the enzyme from sensitive plants accepts both fatty acids. This is an oleate-selective acyltransferase. The protein is Glycerol-3-phosphate acyltransferase, chloroplastic (GAT) of Spinacia oleracea (Spinach).